A 518-amino-acid polypeptide reads, in one-letter code: Glutamate--cysteine ligase (518 aa).

Belongs to the glutamate--cysteine ligase type 1 family. Type 1 subfamily.

The catalysed reaction is L-cysteine + L-glutamate + ATP = gamma-L-glutamyl-L-cysteine + ADP + phosphate + H(+). It functions in the pathway sulfur metabolism; glutathione biosynthesis; glutathione from L-cysteine and L-glutamate: step 1/2. In Salmonella paratyphi C (strain RKS4594), this protein is Glutamate--cysteine ligase.